An 867-amino-acid polypeptide reads, in one-letter code: Probable alpha,alpha-trehalose-phosphate synthase [UDP-forming] 9 (867 aa).

Ser-5 carries the post-translational modification Phosphoserine. At Thr-32 the chain carries Phosphothreonine. The interval 59 to 546 (ERKIIVANML…AKSFMQDLER (488 aa)) is glycosyltransferase.

The protein in the N-terminal section; belongs to the glycosyltransferase 20 family. This sequence in the C-terminal section; belongs to the trehalose phosphatase family.

It carries out the reaction D-glucose 6-phosphate + UDP-alpha-D-glucose = alpha,alpha-trehalose 6-phosphate + UDP + H(+). In Arabidopsis thaliana (Mouse-ear cress), this protein is Probable alpha,alpha-trehalose-phosphate synthase [UDP-forming] 9 (TPS9).